A 63-amino-acid chain; its full sequence is Metallothionein-2 (63 aa).

The interval 1 to 30 (MDPQDCTCAAGDSCSCAGSCKCKNCRCQSC) is beta. Cys-6, Cys-8, Cys-14, Cys-16, Cys-20, Cys-22, Cys-25, Cys-27, Cys-30, Cys-34, Cys-35, Cys-37, Cys-38, Cys-42, Cys-45, Cys-49, Cys-51, Cys-59, Cys-61, and Cys-62 together coordinate a divalent metal cation. The alpha stretch occupies residues 31–63 (RKSCCSCCPASCSNCAKGCVCKEPSSSKCSCCH).

The protein belongs to the metallothionein superfamily. Type 1 family.

In terms of biological role, metallothioneins have a high content of cysteine residues that bind various heavy metals. This is Metallothionein-2 from Columba livia (Rock dove).